A 221-amino-acid chain; its full sequence is Chalcone--flavanone isomerase 2 (221 aa).

Substrate is bound by residues T50, N115, and S192.

The protein belongs to the chalcone isomerase family.

It carries out the reaction a chalcone = a flavanone.. It participates in secondary metabolite biosynthesis; flavonoid biosynthesis. Catalyzes the intramolecular cyclization of bicyclic chalcones into tricyclic (S)-flavanones. Responsible for the isomerization of 4,2',4',6'-tetrahydroxychalcone (also termed chalcone) into naringenin. The chain is Chalcone--flavanone isomerase 2 (CHI2) from Lotus japonicus (Lotus corniculatus var. japonicus).